A 321-amino-acid polypeptide reads, in one-letter code: Glucokinase (321 aa).

ATP is bound at residue 8–13 (GDVGGT).

Belongs to the bacterial glucokinase family.

Its subcellular location is the cytoplasm. The enzyme catalyses D-glucose + ATP = D-glucose 6-phosphate + ADP + H(+). The polypeptide is Glucokinase (Erwinia tasmaniensis (strain DSM 17950 / CFBP 7177 / CIP 109463 / NCPPB 4357 / Et1/99)).